The chain runs to 276 residues: Extracellular metalloprotease VDBG_07883 (276 aa).

An N-terminal signal peptide occupies residues 1–17; that stretch reads MQSKFLWIAAASAATAA. Residues Asn70 and Asn102 are each glycosylated (N-linked (GlcNAc...) asparagine). Position 191 (His191) interacts with Zn(2+). The active site involves Glu192. Residue His195 participates in Zn(2+) binding. N-linked (GlcNAc...) asparagine glycosylation occurs at Asn222. Cys227 and Cys254 are disulfide-bonded.

The protein belongs to the peptidase M43B family.

Its subcellular location is the secreted. Functionally, secreted metalloproteinase that allows assimilation of proteinaceous substrates. This chain is Extracellular metalloprotease VDBG_07883, found in Verticillium alfalfae (strain VaMs.102 / ATCC MYA-4576 / FGSC 10136) (Verticillium wilt of alfalfa).